The following is a 206-amino-acid chain: Large ribosomal subunit protein uL4 (206 aa).

Residues 43 to 78 form a disordered region; that stretch reads ARSGNRKQKDREEVKHTTKKPWRQKGTGRARAGMSS. The segment covering 49 to 58 has biased composition (basic and acidic residues); the sequence is KQKDREEVKH. Basic residues predominate over residues 59-70; that stretch reads TTKKPWRQKGTG.

The protein belongs to the universal ribosomal protein uL4 family. In terms of assembly, part of the 50S ribosomal subunit.

Its function is as follows. One of the primary rRNA binding proteins, this protein initially binds near the 5'-end of the 23S rRNA. It is important during the early stages of 50S assembly. It makes multiple contacts with different domains of the 23S rRNA in the assembled 50S subunit and ribosome. In terms of biological role, forms part of the polypeptide exit tunnel. This chain is Large ribosomal subunit protein uL4, found in Ralstonia pickettii (strain 12J).